A 91-amino-acid chain; its full sequence is Probable Fe(2+)-trafficking protein (91 aa).

This sequence belongs to the Fe(2+)-trafficking protein family.

Could be a mediator in iron transactions between iron acquisition and iron-requiring processes, such as synthesis and/or repair of Fe-S clusters in biosynthetic enzymes. The protein is Probable Fe(2+)-trafficking protein of Shewanella denitrificans (strain OS217 / ATCC BAA-1090 / DSM 15013).